The chain runs to 350 residues: Ceramide synthase 1 (350 aa).

Alanine 2 carries the N-acetylalanine modification. Transmembrane regions (helical) follow at residues 53–73, 103–123, 148–168, 176–196, 239–259, and 287–307; these read AHLA…WTAL, AWKF…LFGT, IAAA…ATLY, SVVM…SYAF, AADL…LYWF, and LLLL…AFAA. Residues 97-311 enclose the TLC domain; the sequence is AKMPESAWKF…IVAFAAKVLT (215 aa).

Post-translationally, acetylated. Deacetylation by SIRT3 increases enzyme activity and promotes mitochondrial ceramide accumulation.

It is found in the endoplasmic reticulum membrane. It catalyses the reaction a sphingoid base + octadecanoyl-CoA = an N-octadecanoyl-sphingoid base + CoA + H(+). It carries out the reaction sphinganine + octadecanoyl-CoA = N-(octadecanoyl)-sphinganine + CoA + H(+). The catalysed reaction is hexadecasphinganine + octadecanoyl-CoA = N-octadecanoylhexadecasphinganine + CoA + H(+). The enzyme catalyses sphing-4-enine + octadecanoyl-CoA = N-octadecanoylsphing-4-enine + CoA + H(+). It catalyses the reaction heptadecasphing-4-enine + octadecanoyl-CoA = N-octadecanoyl-heptadecasphing-4-enine + CoA + H(+). It carries out the reaction 2-hydroxyoctadecanoyl-CoA + sphinganine = N-(2-hydroxyoctadecanoyl)-sphinganine + CoA + H(+). The catalysed reaction is eicosanoyl-CoA + sphinganine = N-eicosanoylsphinganine + CoA + H(+). It participates in lipid metabolism; sphingolipid metabolism. Inhibited by fumonisin B1. Functionally, ceramide synthase that catalyzes the transfer of the acyl chain from acyl-CoA to a sphingoid base, with high selectivity toward stearoyl-CoA (octadecanoyl-CoA; C18:0-CoA). N-acylates sphinganine and sphingosine bases to form dihydroceramides and ceramides in de novo synthesis and salvage pathways, respectively. Plays a predominant role in skeletal muscle in regulating C18 ceramide and dihydroceramide levels with an impact on whole-body glucose metabolism and insulin sensitivity. Protects from diet-induced obesity by suppressing the uptake of glucose in multiple organs in a FGF21-dependent way. Generates C18 ceramides in the brain, playing a critical role in cerebellar development and Purkinje cell function. In response to cellular stress mediates mitophagy, a known defense mechanism against cell transformation and aging. Upon mitochondria fission, generates C18 ceramides that anchor lipidated MAP1LC3B/LC3B-II autophagolysosomes to outer mitochondrial membranes to eliminate damaged mitochondria. In Homo sapiens (Human), this protein is Ceramide synthase 1.